The following is a 318-amino-acid chain: tRNA-cytidine(32) 2-sulfurtransferase (318 aa).

Residues 65–70 (SGGKDS) carry the PP-loop motif motif. 3 residues coordinate [4Fe-4S] cluster: Cys140, Cys143, and Cys231.

The protein belongs to the TtcA family. In terms of assembly, homodimer. Mg(2+) is required as a cofactor. [4Fe-4S] cluster serves as cofactor.

It localises to the cytoplasm. It carries out the reaction cytidine(32) in tRNA + S-sulfanyl-L-cysteinyl-[cysteine desulfurase] + AH2 + ATP = 2-thiocytidine(32) in tRNA + L-cysteinyl-[cysteine desulfurase] + A + AMP + diphosphate + H(+). Its pathway is tRNA modification. Catalyzes the ATP-dependent 2-thiolation of cytidine in position 32 of tRNA, to form 2-thiocytidine (s(2)C32). The sulfur atoms are provided by the cysteine/cysteine desulfurase (IscS) system. This is tRNA-cytidine(32) 2-sulfurtransferase from Herminiimonas arsenicoxydans.